The chain runs to 244 residues: 6-carboxyhexanoate--CoA ligase (244 aa).

Belongs to the BioW family. In terms of assembly, homodimer. Mg(2+) is required as a cofactor.

It catalyses the reaction heptanedioate + ATP + CoA = 6-carboxyhexanoyl-CoA + AMP + diphosphate. Its pathway is metabolic intermediate metabolism; pimeloyl-CoA biosynthesis; pimeloyl-CoA from pimelate: step 1/1. Its function is as follows. Catalyzes the transformation of pimelate into pimeloyl-CoA with concomitant hydrolysis of ATP to AMP. The sequence is that of 6-carboxyhexanoate--CoA ligase from Methanococcus maripaludis (strain DSM 14266 / JCM 13030 / NBRC 101832 / S2 / LL).